The following is a 162-amino-acid chain: Corticoliberin-2 (162 aa).

The signal sequence occupies residues 1 to 24; that stretch reads MRLNFLVTTMALLVAFPPPYECRA. Positions 25–119 are excised as a propeptide; the sequence is IDSSSNQPVT…ALDSEERERR (95 aa). The disordered stretch occupies residues 57–79; that stretch reads LGNRNKNSPRSPPDTYPEASQYS. Phenylalanine amide is present on F160.

Belongs to the sauvagine/corticotropin-releasing factor/urotensin I family.

It localises to the secreted. This hormone from hypothalamus regulates the release of corticotropin from pituitary gland. In Catostomus commersonii (White sucker), this protein is Corticoliberin-2 (crf2).